We begin with the raw amino-acid sequence, 331 residues long: Ketol-acid reductoisomerase (NADP(+)) (331 aa).

Residues 2–182 enclose the KARI N-terminal Rossmann domain; the sequence is AQLFYDSDAD…GGTRAGILET (181 aa). NADP(+)-binding positions include 25 to 28, serine 51, serine 53, and 83 to 86; these read YGSQ and DEFQ. The active site involves histidine 108. Glycine 134 is a binding site for NADP(+). The KARI C-terminal knotted domain occupies 183–328; the sequence is NFKEETETDL…KGLRAMFSWL (146 aa). The Mg(2+) site is built by aspartate 191, glutamate 195, glutamate 227, and glutamate 231. Serine 252 provides a ligand contact to substrate.

This sequence belongs to the ketol-acid reductoisomerase family. Requires Mg(2+) as cofactor.

The enzyme catalyses (2R)-2,3-dihydroxy-3-methylbutanoate + NADP(+) = (2S)-2-acetolactate + NADPH + H(+). The catalysed reaction is (2R,3R)-2,3-dihydroxy-3-methylpentanoate + NADP(+) = (S)-2-ethyl-2-hydroxy-3-oxobutanoate + NADPH + H(+). It functions in the pathway amino-acid biosynthesis; L-isoleucine biosynthesis; L-isoleucine from 2-oxobutanoate: step 2/4. It participates in amino-acid biosynthesis; L-valine biosynthesis; L-valine from pyruvate: step 2/4. Involved in the biosynthesis of branched-chain amino acids (BCAA). Catalyzes an alkyl-migration followed by a ketol-acid reduction of (S)-2-acetolactate (S2AL) to yield (R)-2,3-dihydroxy-isovalerate. In the isomerase reaction, S2AL is rearranged via a Mg-dependent methyl migration to produce 3-hydroxy-3-methyl-2-ketobutyrate (HMKB). In the reductase reaction, this 2-ketoacid undergoes a metal-dependent reduction by NADPH to yield (R)-2,3-dihydroxy-isovalerate. This Prochlorococcus marinus (strain MIT 9303) protein is Ketol-acid reductoisomerase (NADP(+)).